Reading from the N-terminus, the 728-residue chain is Cytosolic endo-beta-N-acetylglucosaminidase (728 aa).

Residues 287–381 (QNRVFFDACD…NFLLNEDKFW (95 aa)) enclose the BRCT domain.

The protein belongs to the glycosyl hydrolase 85 family.

It localises to the cytoplasm. It is found in the cytosol. It catalyses the reaction an N(4)-(oligosaccharide-(1-&gt;3)-[oligosaccharide-(1-&gt;6)]-beta-D-Man-(1-&gt;4)-beta-D-GlcNAc-(1-&gt;4)-alpha-D-GlcNAc)-L-asparaginyl-[protein] + H2O = an oligosaccharide-(1-&gt;3)-[oligosaccharide-(1-&gt;6)]-beta-D-Man-(1-&gt;4)-D-GlcNAc + N(4)-(N-acetyl-beta-D-glucosaminyl)-L-asparaginyl-[protein]. Endoglycosidase that releases N-glycans from glycoproteins by cleaving the beta-1,4-glycosidic bond in the N,N'-diacetylchitobiose core. Involved in the processing of free oligosaccharides in the cytosol. In Gallus gallus (Chicken), this protein is Cytosolic endo-beta-N-acetylglucosaminidase (ENGASE).